Consider the following 245-residue polypeptide: tRNA pseudouridine synthase A (245 aa).

The active-site Nucleophile is Asp52. Substrate is bound at residue Tyr111.

The protein belongs to the tRNA pseudouridine synthase TruA family. As to quaternary structure, homodimer.

The enzyme catalyses uridine(38/39/40) in tRNA = pseudouridine(38/39/40) in tRNA. In terms of biological role, formation of pseudouridine at positions 38, 39 and 40 in the anticodon stem and loop of transfer RNAs. This chain is tRNA pseudouridine synthase A, found in Wolbachia pipientis subsp. Culex pipiens (strain wPip).